A 496-amino-acid chain; its full sequence is 4-O-methyl-glucuronoyl methylesterase 1 (496 aa).

Positions 1-19 are cleaved as a signal peptide; sequence MKSTVASALLVLAGTAVQA. The region spanning 20 to 55 is the CBM1 domain; that stretch reads QSGPWQQCGGIGWQGPFTCVSGHTCQVLNDWYHQCV. Residues 57-151 form a disordered region; that stretch reads GGGPSPPPTS…RLPDPFTFHN (95 aa). Residues 59-125 are compositionally biased toward pro residues; that stretch reads GPSPPPTSPP…SPPPTSPPPS (67 aa). Disulfide bonds link Cys129/Cys163, Cys307/Cys443, and Cys339/Cys415. Residues 306-311 carry the GXSYXG catalytic site motif motif; it reads GCSRNG. Ser308 (nucleophile) is an active-site residue. Residues Lys312, Gln354, Glu362, and Trp406 each coordinate substrate. His442 functions as the Proton donor/acceptor in the catalytic mechanism.

Belongs to the carbohydrate esterase 15 (CE15) family.

Its subcellular location is the secreted. The catalysed reaction is a 4-O-methyl-alpha-D-glucuronosyl ester derivative + H2O = 4-O-methyl-alpha-D-glucuronate derivative + an alcohol + H(+). Functionally, glucuronoyl esterase which may play a significant role in biomass degradation, as it is considered to disconnect hemicellulose from lignin through the hydrolysis of the ester bond between 4-O-methyl-D-glucuronic acid residues of glucuronoxylans and aromatic alcohols of lignin. Cleaves native lignin-carbohydrate (LC) ester bonds from LC complex preparations of spruce (softwood) and birch (hardwood), containing mainly hemicelluloses with partially acetylated glucomannans in spruce and partially acetylated xylan in birch. Can hydrolyze benzyl glucuronic acid (BnGlcA), allyl glucuronic acid (allylGlcA) and to a lower degree methyl glucuronic acid (MeGlcA) in vitro. The sequence is that of 4-O-methyl-glucuronoyl methylesterase 1 from Sodiomyces alcalophilus (Acremonium alcalophilum).